We begin with the raw amino-acid sequence, 411 residues long: Flagellum-associated coiled-coil domain-containing protein 1 (411 aa).

A disordered region spans residues 52 to 77 (SQPAKSTAFPRDKAQSRKLEESNKAP). Positions 61-74 (PRDKAQSRKLEESN) are enriched in basic and acidic residues. 2 coiled-coil regions span residues 124–220 (SDII…LKNM) and 278–328 (NESF…VVLE). An N6-acetyllysine modification is found at lysine 353. Positions 355-385 (FQTKLAEAEEKYKSTIQVLTEENNSLRQKVL) form a coiled coil.

The protein resides in the cytoplasm. It localises to the cytoplasmic granule. Its subcellular location is the cell projection. The protein localises to the cilium. It is found in the flagellum. This Rattus norvegicus (Rat) protein is Flagellum-associated coiled-coil domain-containing protein 1.